A 286-amino-acid polypeptide reads, in one-letter code: Protein NipSnap homolog 2 (286 aa).

The transit peptide at 1 to 40 directs the protein to the mitochondrion; it reads MATRVLHSSCSGLYRAAGPARGKGHATAVIRSLSASHNRP.

This sequence belongs to the NipSnap family.

Its subcellular location is the mitochondrion matrix. Protein involved in mitophagy. Accumulates on the mitochondria surface in response to mitochondrial depolarization and acts as a 'eat me' signal by recruiting proteins involved in selective autophagy. This Danio rerio (Zebrafish) protein is Protein NipSnap homolog 2 (nipsnap2).